Reading from the N-terminus, the 188-residue chain is Elongation factor P (188 aa).

The protein belongs to the elongation factor P family.

It localises to the cytoplasm. It functions in the pathway protein biosynthesis; polypeptide chain elongation. Functionally, involved in peptide bond synthesis. Stimulates efficient translation and peptide-bond synthesis on native or reconstituted 70S ribosomes in vitro. Probably functions indirectly by altering the affinity of the ribosome for aminoacyl-tRNA, thus increasing their reactivity as acceptors for peptidyl transferase. The chain is Elongation factor P from Leptospira borgpetersenii serovar Hardjo-bovis (strain JB197).